The sequence spans 208 residues: MLSIILKESVRNLGKAGVVTKVKPGYARYLLTQKKAVRATKENLKNLEEQYLVIERENLEKLEAAKALKLSLEDEFLIITRQAADDGKLFGSVTPKCISKLLSDKGYNIHYRNIFFYSVIKYIGEYVVNLELHPDLVLPITLYVVKNDLGAMQAQKLHAEKKRKIEKEVEEGSGTSVDESLKLDSVSDSIDTSGVNSSDKEEENNIIE.

Residues 161–208 (KKRKIEKEVEEGSGTSVDESLKLDSVSDSIDTSGVNSSDKEEENNIIE) are disordered. The span at 186–197 (VSDSIDTSGVNS) shows a compositional bias: polar residues.

It belongs to the bacterial ribosomal protein bL9 family.

Its function is as follows. Binds to the 23S rRNA. The sequence is that of Large ribosomal subunit protein bL9 from Ehrlichia canis (strain Jake).